The chain runs to 69 residues: Small, acid-soluble spore protein I (69 aa).

The protein belongs to the SspI family.

Its subcellular location is the spore core. The protein is Small, acid-soluble spore protein I of Geobacillus kaustophilus (strain HTA426).